A 426-amino-acid chain; its full sequence is Histidine--tRNA ligase (426 aa).

It belongs to the class-II aminoacyl-tRNA synthetase family. As to quaternary structure, homodimer.

The protein resides in the cytoplasm. The catalysed reaction is tRNA(His) + L-histidine + ATP = L-histidyl-tRNA(His) + AMP + diphosphate + H(+). This is Histidine--tRNA ligase from Corynebacterium kroppenstedtii (strain DSM 44385 / JCM 11950 / CIP 105744 / CCUG 35717).